A 303-amino-acid polypeptide reads, in one-letter code: UDP-3-O-acyl-N-acetylglucosamine deacetylase (303 aa).

Zn(2+)-binding residues include His-77, His-236, and Asp-240. The active-site Proton donor is His-263.

The protein belongs to the LpxC family. Requires Zn(2+) as cofactor.

The enzyme catalyses a UDP-3-O-[(3R)-3-hydroxyacyl]-N-acetyl-alpha-D-glucosamine + H2O = a UDP-3-O-[(3R)-3-hydroxyacyl]-alpha-D-glucosamine + acetate. The protein operates within glycolipid biosynthesis; lipid IV(A) biosynthesis; lipid IV(A) from (3R)-3-hydroxytetradecanoyl-[acyl-carrier-protein] and UDP-N-acetyl-alpha-D-glucosamine: step 2/6. Catalyzes the hydrolysis of UDP-3-O-myristoyl-N-acetylglucosamine to form UDP-3-O-myristoylglucosamine and acetate, the committed step in lipid A biosynthesis. In Ruthia magnifica subsp. Calyptogena magnifica, this protein is UDP-3-O-acyl-N-acetylglucosamine deacetylase.